The following is a 256-amino-acid chain: Pimeloyl-[acyl-carrier protein] methyl ester esterase (256 aa).

The region spanning 15–242 is the AB hydrolase-1 domain; it reads HLVLLHGWGL…AAHAPFISHP (228 aa). Substrate-binding positions include W22, 82-83, and 143-147; these read SL and FLALQ. The active-site Nucleophile is S82. Residues D207 and H235 contribute to the active site. H235 contacts substrate.

This sequence belongs to the AB hydrolase superfamily. Carboxylesterase BioH family. Monomer.

Its subcellular location is the cytoplasm. The catalysed reaction is 6-carboxyhexanoyl-[ACP] methyl ester + H2O = 6-carboxyhexanoyl-[ACP] + methanol + H(+). Its pathway is cofactor biosynthesis; biotin biosynthesis. Its function is as follows. The physiological role of BioH is to remove the methyl group introduced by BioC when the pimeloyl moiety is complete. It allows to synthesize pimeloyl-ACP via the fatty acid synthetic pathway through the hydrolysis of the ester bonds of pimeloyl-ACP esters. The chain is Pimeloyl-[acyl-carrier protein] methyl ester esterase from Salmonella agona (strain SL483).